The sequence spans 238 residues: MPVDEQPTTPEAVQWRTIEDLPIHPSWRKVLEPVMDQIRDLGQFLTAETQAGRGFLPPEPDIFRAFSYPFEEVKVLILGQDPYPTPGHSMGLCFSTQPGVRPLPRSLVNIFKEMATDLGVSINATDGDLRPWSRQGVMLLNRVLTVQPGNSNSHKGRGWEAVTEAAITALGQRDQPLVAILWGRQAQAVQKFLGDTPCITSAHPSPLSASRGFFGSRPFSTTNRMLDDLGATPVDWRL.

The active-site Proton acceptor is Asp81.

This sequence belongs to the uracil-DNA glycosylase (UDG) superfamily. UNG family.

It is found in the cytoplasm. It carries out the reaction Hydrolyzes single-stranded DNA or mismatched double-stranded DNA and polynucleotides, releasing free uracil.. In terms of biological role, excises uracil residues from the DNA which can arise as a result of misincorporation of dUMP residues by DNA polymerase or due to deamination of cytosine. This chain is Uracil-DNA glycosylase, found in Corynebacterium efficiens (strain DSM 44549 / YS-314 / AJ 12310 / JCM 11189 / NBRC 100395).